We begin with the raw amino-acid sequence, 840 residues long: 9-beta-pimara-7,15-diene synthase, chloroplastic (840 aa).

A chloroplast-targeting transit peptide spans 1–56 (MASPMEAVARSSLVLAPRRRRALGLLPAAAAPFVLDCRRRHNGGMRRPHVSFACSA). Residues D589, D593, N733, S737, and E741 each coordinate Mg(2+). Residues 589–593 (DDFFD) carry the DDXXD motif motif.

The protein belongs to the terpene synthase family. Mg(2+) serves as cofactor.

The protein localises to the plastid. It is found in the chloroplast. The catalysed reaction is 9alpha-copalyl diphosphate = 9beta-pimara-7,15-diene + diphosphate. Functionally, involved in the biosynthesis of momilactone A and B phytoalexins. Catalyzes the conversion of syn-copalyl diphosphate to the phytoalexin precursor syn-pimara-7,15-diene. The polypeptide is 9-beta-pimara-7,15-diene synthase, chloroplastic (Oryza sativa subsp. indica (Rice)).